We begin with the raw amino-acid sequence, 125 residues long: Fumarate reductase subunit D (125 aa).

Helical transmembrane passes span 30–50 (FAMITPITVLVLGILVPLGVI), 63–83 (FATSIIGALFIIGTLALPMWH), and 105–125 (IACYAFAGLISALAVVFIFMI).

Belongs to the FrdD family. In terms of assembly, part of an enzyme complex containing four subunits: a flavoprotein (FrdA), an iron-sulfur protein (FrdB), and two hydrophobic anchor proteins (FrdC and FrdD).

It localises to the cell inner membrane. Anchors the catalytic components of the fumarate reductase complex to the cell membrane, binds quinones. The protein is Fumarate reductase subunit D of Vibrio campbellii (strain ATCC BAA-1116).